Consider the following 434-residue polypeptide: F-box/kelch-repeat protein At1g55270 (434 aa).

The F-box domain occupies 76 to 122 (PPLLPGLPDDLAVACLIRVPRAEHRKLRLVCKRWYRLASGNFFYSQR). Kelch repeat units follow at residues 129–178 (EEWV…VLSG), 180–227 (HLYL…VINN), 229–276 (LYVA…VYDK), 278–321 (WFLK…SLNG), and 325–371 (GLDC…LHNK).

This is F-box/kelch-repeat protein At1g55270 from Arabidopsis thaliana (Mouse-ear cress).